The chain runs to 382 residues: Sphingoid long-chain base transporter RSB1 (382 aa).

Residues 1–34 (MSNATNNTLGSLLPQLEAAANSNSLYGGMVPNLR) are Extracellular-facing. Asparagine 3 and asparagine 6 each carry an N-linked (GlcNAc...) asparagine glycan. Residues 35–55 (FNITMIVIWGILLTIHVVQLL) form a helical membrane-spanning segment. Topologically, residues 56–57 (MR) are cytoplasmic. A helical membrane pass occupies residues 58-78 (QYWFSIAFICTGILEVLGFIG). Over 79 to 90 (RTWSHSNVADMD) the chain is Extracellular. Residues 91-111 (AFLLNMICLTIAPVFTMGGIY) form a helical membrane-spanning segment. Topologically, residues 112–135 (YQLAKLIEVYGHRFSLLPSPMAYS) are cytoplasmic. A helical transmembrane segment spans residues 136–156 (FIFICSDIVSLVVQAVGGGLC). At 157-171 (GVAVTDGTSTTTGNH) the chain is on the extracellular side. Residues 172–192 (VFIAGLAIQVASMAIFLMLWF) form a helical membrane-spanning segment. Over 193–241 (HFLFRIYISVRWEHINSRPISLSLLKISQTEVDYLYREKFHFLRLEPKR) the chain is Cytoplasmic. Residues 242-262 (WVFHYFNLAITVAVLTIFTRC) form a helical membrane-spanning segment. Over 263–281 (CYRLAELVVGWDGYLITHE) the chain is Extracellular. Residues 282-302 (WYFIILDALMMAIATVTLTIF) traverse the membrane as a helical segment. Residues 303–382 (HPGFAFKGRS…LFSSKKKAKL (80 aa)) lie on the Cytoplasmic side of the membrane.

Belongs to the lipid-translocating exporter (LTE) (TC 9.A.26.1) family.

The protein localises to the cell membrane. Its function is as follows. Catalyzes the ATP-dependent translocation of sphingoid long-chain bases (LCBs) from the cytoplasmic site toward the extracytoplasmic side of the membrane (flip-flop). Involved in the establishment of the functional lipid asymmetry of the plasma membrane. Regulates intracellular levels of LCBs, sphingolipid precursors that are growth inhibitory at increased levels. This is Sphingoid long-chain base transporter RSB1 (RSB1) from Saccharomyces cerevisiae (strain ATCC 204508 / S288c) (Baker's yeast).